Reading from the N-terminus, the 720-residue chain is DNA helicase II (720 aa).

Residues 8-286 form the UvrD-like helicase ATP-binding domain; sequence DSLNDKQREA…IRLEQNYRST (279 aa). Residues 32–37 and Arg284 each bind ATP; that span reads GSGKTR. The UvrD-like helicase C-terminal domain occupies 287–564; sequence SNILSAANAL…QLMTLHSAKG (278 aa).

Belongs to the helicase family. UvrD subfamily.

It catalyses the reaction Couples ATP hydrolysis with the unwinding of duplex DNA by translocating in the 3'-5' direction.. The catalysed reaction is ATP + H2O = ADP + phosphate + H(+). Its function is as follows. A helicase with DNA-dependent ATPase activity. Unwinds DNA duplexes with 3'-5' polarity. Translocates on single-stranded DNA with 3'-5' polarity. Initiates unwinding more efficiently from a nicked substrate than double-stranded DNA. Involved in the post-incision events of nucleotide excision repair and methyl-directed mismatch repair, and probably also in repair of alkylated DNA. The polypeptide is DNA helicase II (Escherichia coli (strain K12)).